Here is an 85-residue protein sequence, read N- to C-terminus: Platelet factor 4 (85 aa).

Intrachain disulfides connect Cys-25-Cys-51 and Cys-27-Cys-67. Phosphoserine is present on Ser-41. 76-82 (KKIIKRL) provides a ligand contact to heparin.

Belongs to the intercrine alpha (chemokine CxC) family. In terms of assembly, homotetramer. Interacts with TNFAIP6 (via Link domain). Interacts with CCR1. Interacts with CXCR3. Interacts with THBD; this interaction enhances generation of activated protein C.

Its subcellular location is the secreted. In terms of biological role, chemokine released during platelet aggregation that plays a role in different biological processes including hematopoiesis, cell proliferation, differentiation, and activation. Acts via different functional receptors including CCR1, CXCR3A or CXCR3B. Upon interaction with CXCR3A receptor, induces activated T-lymphocytes migration mediated via downstream Ras/extracellular signal-regulated kinase (ERK) signaling. Neutralizes the anticoagulant effect of heparin by binding more strongly to heparin than to the chondroitin-4-sulfate chains of the carrier molecule. Plays a role in the inhibition of hematopoiesis and in the maintenance of hematopoietic stem cell (HSC) quiescence. Chemotactic for neutrophils and monocytes via CCR1. Inhibits endothelial cell proliferation. In cooperation with toll-like receptor 8/TLR8, induces chromatin remodeling and activates inflammatory gene expression via the TBK1-IRF5 axis. In addition, induces myofibroblast differentiation and collagen synthesis in different precursor cells, including endothelial cells, by stimulating endothelial-to-mesenchymal transition. Interacts with thrombomodulin/THBD to enhance the activation of protein C and thus potentiates its anticoagulant activity. This is Platelet factor 4 (PF4) from Ovis aries (Sheep).